A 134-amino-acid chain; its full sequence is MKRFWAMVCALFLSVSLLLTSCANVPTGLTGNFREDTLALISSLREAIALPENDPNKKAAQAEARKKLNDFFALYRRDDSLRSLSSFMTMQTALNSLAGHYSSYPNRPLPEKLKARLEQEFKQVELALDREAKS.

Residues 1–21 form the signal peptide; sequence MKRFWAMVCALFLSVSLLLTS. C22 is lipidated: N-palmitoyl cysteine. Residue C22 is the site of S-diacylglycerol cysteine attachment.

Belongs to the Psb27 family. As to quaternary structure, part of a photosystem II (PSII) assembly intermediate complex PSII-I; crystallized from a strain deleted of psbJ, it forms monomeric PSII before addition of the oxygen evolving complex. PSII-I includes 3 assembly factors not found in mature PSII (Psb27, Psb28 and Psb34). Binds to the lumenal side of PSII, adjacent to the CP43 (psbC) subunit.

Its subcellular location is the cellular thylakoid membrane. Plays a role in the repair and/or biogenesis of the calcium-manganese-oxide cluster on the lumenal face of the thylakoid membrane. Its presence in a photosystem II (PSII) preparation prevents binding of other extrinsic subunits PsbO, PsbU and PsbV, and thus assembly of calcium-manganese-oxide cluster. Psb27-containing complexes lack oxygen evolving activity and an oxidizable calcium-manganese-oxide cluster, but have a normal reaction center. This chain is Photosystem II assembly factor lipoprotein Psb27, found in Thermosynechococcus vestitus (strain NIES-2133 / IAM M-273 / BP-1).